We begin with the raw amino-acid sequence, 430 residues long: Chaperone SurA (430 aa).

The signal sequence occupies residues 1 to 25; sequence MQIIKTTIATFTAIAFTGAASFTSA. 2 consecutive PpiC domains span residues 176 to 277 and 286 to 385; these read SPDY…KLYE and VNQT…KVEE.

It localises to the periplasm. It carries out the reaction [protein]-peptidylproline (omega=180) = [protein]-peptidylproline (omega=0). In terms of biological role, chaperone involved in the correct folding and assembly of outer membrane proteins. Recognizes specific patterns of aromatic residues and the orientation of their side chains, which are found more frequently in integral outer membrane proteins. May act in both early periplasmic and late outer membrane-associated steps of protein maturation. This is Chaperone SurA from Saccharophagus degradans (strain 2-40 / ATCC 43961 / DSM 17024).